The chain runs to 279 residues: tRNA (guanine-N(1)-)-methyltransferase (279 aa).

S-adenosyl-L-methionine-binding positions include Gly-132 and 152 to 157; that span reads IGDYVL.

The protein belongs to the RNA methyltransferase TrmD family. In terms of assembly, homodimer.

It localises to the cytoplasm. It carries out the reaction guanosine(37) in tRNA + S-adenosyl-L-methionine = N(1)-methylguanosine(37) in tRNA + S-adenosyl-L-homocysteine + H(+). Its function is as follows. Specifically methylates guanosine-37 in various tRNAs. This Saccharophagus degradans (strain 2-40 / ATCC 43961 / DSM 17024) protein is tRNA (guanine-N(1)-)-methyltransferase.